A 421-amino-acid polypeptide reads, in one-letter code: D-amino acid dehydrogenase (421 aa).

4–18 lines the FAD pocket; it reads VLVLGSGVVGLTSAW.

The protein belongs to the DadA oxidoreductase family. It depends on FAD as a cofactor.

The enzyme catalyses a D-alpha-amino acid + A + H2O = a 2-oxocarboxylate + AH2 + NH4(+). It participates in amino-acid degradation; D-alanine degradation; NH(3) and pyruvate from D-alanine: step 1/1. Oxidative deamination of D-amino acids. The polypeptide is D-amino acid dehydrogenase (Vibrio cholerae serotype O1 (strain ATCC 39541 / Classical Ogawa 395 / O395)).